The chain runs to 125 residues: Basic leucine zipper transcriptional factor ATF-like (125 aa).

The segment covering Met1–Arg14 has biased composition (low complexity). The segment at Met1–Ser58 is disordered. Residues Asp26 to His89 form the bZIP domain. The tract at residues Arg28–Lys50 is basic motif. At Ser43 the chain carries Phosphoserine. A Phosphothreonine modification is found at Thr48. A leucine-zipper region spans residues Leu54–Leu75.

This sequence belongs to the bZIP family. In terms of assembly, heterodimer; mainly heterodimerizes with JUNB. The BATF-JUNB heterodimer interacts with IRF4 and IRF8. Interacts (via bZIP domain) with IRF4 and IRF8; the interaction is direct. Also forms heterodimers with JUN and JUND. Interacts with IFI35. Post-translationally, phosphorylated on serine and threonine residues and at least one tyrosine residue. Phosphorylation at Ser-43 inhibit DNA binding activity and transforms it as a negative regulator of AP-1 mediated transcription.

It is found in the nucleus. Its subcellular location is the cytoplasm. Its function is as follows. AP-1 family transcription factor that controls the differentiation of lineage-specific cells in the immune system: specifically mediates the differentiation of T-helper 17 cells (Th17), follicular T-helper cells (TfH), CD8(+) dendritic cells and class-switch recombination (CSR) in B-cells. Acts via the formation of a heterodimer with JUNB that recognizes and binds DNA sequence 5'-TGA[CG]TCA-3'. The BATF-JUNB heterodimer also forms a complex with IRF4 (or IRF8) in immune cells, leading to recognition of AICE sequence (5'-TGAnTCA/GAAA-3'), an immune-specific regulatory element, followed by cooperative binding of BATF and IRF4 (or IRF8) and activation of genes. Controls differentiation of T-helper cells producing interleukin-17 (Th17 cells) by binding to Th17-associated gene promoters: regulates expression of the transcription factor RORC itself and RORC target genes such as IL17 (IL17A or IL17B). Also involved in differentiation of follicular T-helper cells (TfH) by directing expression of BCL6 and MAF. In B-cells, involved in class-switch recombination (CSR) by controlling the expression of both AICDA and of germline transcripts of the intervening heavy-chain region and constant heavy-chain region (I(H)-C(H)). Following infection, can participate in CD8(+) dendritic cell differentiation via interaction with IRF4 and IRF8 to mediate cooperative gene activation. Regulates effector CD8(+) T-cell differentiation by regulating expression of SIRT1. Following DNA damage, part of a differentiation checkpoint that limits self-renewal of hematopoietic stem cells (HSCs): up-regulated by STAT3, leading to differentiation of HSCs, thereby restricting self-renewal of HSCs. This chain is Basic leucine zipper transcriptional factor ATF-like (BATF), found in Bos taurus (Bovine).